A 604-amino-acid polypeptide reads, in one-letter code: Linalool synthase Tps-5073L4, chloroplastic (604 aa).

The transit peptide at 1–36 (MSSMRIYVAIMKKPSVKHVDYVDKKASKPSWRVSSS) directs the protein to the chloroplast. Arg323, Asp360, Asp364, Arg501, and Asp504 together coordinate (2E)-geranyl diphosphate. Positions 360 and 364 each coordinate Mg(2+). A DDXXD motif motif is present at residues 360–364 (DDVYD). Residues Asp504, Thr508, and Glu512 each coordinate Mg(2+).

Belongs to the terpene synthase family. Tpsb subfamily. As to quaternary structure, monomer. It depends on Mg(2+) as a cofactor. Mn(2+) serves as cofactor.

It is found in the plastid. The protein localises to the chloroplast. It catalyses the reaction (2E)-geranyl diphosphate + H2O = linalool + diphosphate. It functions in the pathway secondary metabolite biosynthesis; terpenoid biosynthesis. Monoterpene synthase (mono-TPS) involved in the biosynthesis of monoterpenes natural products. Catalyzes the conversion of (2E)-geranyl diphosphate (GPP) into linalool. The protein is Linalool synthase Tps-5073L4, chloroplastic of Perilla frutescens (Beefsteak mint).